The following is a 413-amino-acid chain: Serine hydroxymethyltransferase (413 aa).

Residues L120 and 124 to 126 contribute to the (6S)-5,6,7,8-tetrahydrofolate site; that span reads GHL. K228 bears the N6-(pyridoxal phosphate)lysine mark.

This sequence belongs to the SHMT family. In terms of assembly, homodimer. Pyridoxal 5'-phosphate serves as cofactor.

Its subcellular location is the cytoplasm. The catalysed reaction is (6R)-5,10-methylene-5,6,7,8-tetrahydrofolate + glycine + H2O = (6S)-5,6,7,8-tetrahydrofolate + L-serine. The protein operates within one-carbon metabolism; tetrahydrofolate interconversion. It functions in the pathway amino-acid biosynthesis; glycine biosynthesis; glycine from L-serine: step 1/1. Its function is as follows. Catalyzes the reversible interconversion of serine and glycine with tetrahydrofolate (THF) serving as the one-carbon carrier. This reaction serves as the major source of one-carbon groups required for the biosynthesis of purines, thymidylate, methionine, and other important biomolecules. Also exhibits THF-independent aldolase activity toward beta-hydroxyamino acids, producing glycine and aldehydes, via a retro-aldol mechanism. In Agathobacter rectalis (strain ATCC 33656 / DSM 3377 / JCM 17463 / KCTC 5835 / VPI 0990) (Eubacterium rectale), this protein is Serine hydroxymethyltransferase.